Here is a 378-residue protein sequence, read N- to C-terminus: Erythronate-4-phosphate dehydrogenase (378 aa).

Positions 45 and 66 each coordinate substrate. Residue D146 coordinates NAD(+). R207 is a catalytic residue. Position 231 (D231) interacts with NAD(+). E236 is an active-site residue. H253 acts as the Proton donor in catalysis. G256 serves as a coordination point for NAD(+).

Belongs to the D-isomer specific 2-hydroxyacid dehydrogenase family. PdxB subfamily. Homodimer.

It localises to the cytoplasm. The enzyme catalyses 4-phospho-D-erythronate + NAD(+) = (R)-3-hydroxy-2-oxo-4-phosphooxybutanoate + NADH + H(+). Its pathway is cofactor biosynthesis; pyridoxine 5'-phosphate biosynthesis; pyridoxine 5'-phosphate from D-erythrose 4-phosphate: step 2/5. Functionally, catalyzes the oxidation of erythronate-4-phosphate to 3-hydroxy-2-oxo-4-phosphonooxybutanoate. The polypeptide is Erythronate-4-phosphate dehydrogenase (Wigglesworthia glossinidia brevipalpis).